A 206-amino-acid chain; its full sequence is Orotate phosphoribosyltransferase (206 aa).

Residues Arg-93, Lys-97, His-99, and Glu-119–Thr-127 each bind 5-phospho-alpha-D-ribose 1-diphosphate. Residue Ser-123 coordinates orotate.

The protein belongs to the purine/pyrimidine phosphoribosyltransferase family. PyrE subfamily. Homodimer. Mg(2+) serves as cofactor.

It carries out the reaction orotidine 5'-phosphate + diphosphate = orotate + 5-phospho-alpha-D-ribose 1-diphosphate. It participates in pyrimidine metabolism; UMP biosynthesis via de novo pathway; UMP from orotate: step 1/2. In terms of biological role, catalyzes the transfer of a ribosyl phosphate group from 5-phosphoribose 1-diphosphate to orotate, leading to the formation of orotidine monophosphate (OMP). This is Orotate phosphoribosyltransferase from Bacillus caldolyticus.